A 545-amino-acid polypeptide reads, in one-letter code: CTP synthase (545 aa).

The segment at 1 to 266 (MKTKFIFITG…DQKIAIMLKL (266 aa)) is amidoligase domain. Serine 14 serves as a coordination point for CTP. Serine 14 is a binding site for UTP. ATP is bound by residues 15-20 (SLGKGL) and aspartate 72. 2 residues coordinate Mg(2+): aspartate 72 and glutamate 140. Residues 147–149 (DIE), 187–192 (KTKPTQ), and lysine 223 contribute to the CTP site. UTP contacts are provided by residues 187-192 (KTKPTQ) and lysine 223. One can recognise a Glutamine amidotransferase type-1 domain in the interval 291–545 (TIGIVGKYVD…IKASCENKNK (255 aa)). Glycine 353 lines the L-glutamine pocket. Cysteine 380 (nucleophile; for glutamine hydrolysis) is an active-site residue. L-glutamine contacts are provided by residues 381–384 (LGMQ), glutamate 404, and arginine 472. Residues histidine 518 and glutamate 520 contribute to the active site.

It belongs to the CTP synthase family. Homotetramer.

The catalysed reaction is UTP + L-glutamine + ATP + H2O = CTP + L-glutamate + ADP + phosphate + 2 H(+). The enzyme catalyses L-glutamine + H2O = L-glutamate + NH4(+). It catalyses the reaction UTP + NH4(+) + ATP = CTP + ADP + phosphate + 2 H(+). It participates in pyrimidine metabolism; CTP biosynthesis via de novo pathway; CTP from UDP: step 2/2. Its activity is regulated as follows. Allosterically activated by GTP, when glutamine is the substrate; GTP has no effect on the reaction when ammonia is the substrate. The allosteric effector GTP functions by stabilizing the protein conformation that binds the tetrahedral intermediate(s) formed during glutamine hydrolysis. Inhibited by the product CTP, via allosteric rather than competitive inhibition. Its function is as follows. Catalyzes the ATP-dependent amination of UTP to CTP with either L-glutamine or ammonia as the source of nitrogen. Regulates intracellular CTP levels through interactions with the four ribonucleotide triphosphates. This chain is CTP synthase, found in Maridesulfovibrio salexigens (strain ATCC 14822 / DSM 2638 / NCIMB 8403 / VKM B-1763) (Desulfovibrio salexigens).